Here is a 119-residue protein sequence, read N- to C-terminus: MNLANYFPVLLFILVGIGVGLVPMFLGKILAPSKPDAEKLSPYECGFEAFEDARMKFDVRYYLIAILFILFDLETAFLFPWGVALRDIGWLGYASMVIFLLEFIVGFVYIWKKGALDWE.

3 helical membrane passes run 7–27 (FPVL…MFLG), 63–83 (LIAI…PWGV), and 88–108 (IGWL…VGFV).

It belongs to the complex I subunit 3 family. As to quaternary structure, NDH-1 is composed of 14 different subunits. Subunits NuoA, H, J, K, L, M, N constitute the membrane sector of the complex.

The protein localises to the cell inner membrane. It carries out the reaction a quinone + NADH + 5 H(+)(in) = a quinol + NAD(+) + 4 H(+)(out). In terms of biological role, NDH-1 shuttles electrons from NADH, via FMN and iron-sulfur (Fe-S) centers, to quinones in the respiratory chain. The immediate electron acceptor for the enzyme in this species is believed to be ubiquinone. Couples the redox reaction to proton translocation (for every two electrons transferred, four hydrogen ions are translocated across the cytoplasmic membrane), and thus conserves the redox energy in a proton gradient. The sequence is that of NADH-quinone oxidoreductase subunit A from Polynucleobacter necessarius subsp. necessarius (strain STIR1).